The primary structure comprises 405 residues: Tryptophan synthase beta chain (405 aa).

Lys-96 is modified (N6-(pyridoxal phosphate)lysine).

The protein belongs to the TrpB family. As to quaternary structure, tetramer of two alpha and two beta chains. Requires pyridoxal 5'-phosphate as cofactor.

The enzyme catalyses (1S,2R)-1-C-(indol-3-yl)glycerol 3-phosphate + L-serine = D-glyceraldehyde 3-phosphate + L-tryptophan + H2O. It functions in the pathway amino-acid biosynthesis; L-tryptophan biosynthesis; L-tryptophan from chorismate: step 5/5. In terms of biological role, the beta subunit is responsible for the synthesis of L-tryptophan from indole and L-serine. The sequence is that of Tryptophan synthase beta chain from Clostridium botulinum (strain Eklund 17B / Type B).